The sequence spans 346 residues: Large ribosomal subunit protein uL3 (346 aa).

Residues 324-346 (KPPKKKPPVERPQITYVSRESKQ) form a disordered region.

This sequence belongs to the universal ribosomal protein uL3 family. As to quaternary structure, part of the 50S ribosomal subunit. Forms a cluster with proteins L14 and L24e.

Its function is as follows. One of the primary rRNA binding proteins, it binds directly near the 3'-end of the 23S rRNA, where it nucleates assembly of the 50S subunit. The polypeptide is Large ribosomal subunit protein uL3 (Thermococcus gammatolerans (strain DSM 15229 / JCM 11827 / EJ3)).